A 768-amino-acid chain; its full sequence is Calcium up-regulated protein G (768 aa).

A disordered region spans residues 1 to 22; the sequence is MINIEDISKSSNQSEEKQLKST. 2 Ricin B-type lectin domains span residues 1-107 and 100-248; these read MINI…WTID and KTQI…WGIN.

Belongs to the cup family.

It is found in the cytoplasm. The protein resides in the membrane. May play an important role in stabilizing and/or regulating the cell membrane during Ca(2+) stress or certain stages of development. This chain is Calcium up-regulated protein G (cupG), found in Dictyostelium discoideum (Social amoeba).